A 2117-amino-acid chain; its full sequence is Tudor domain-containing 6 (2117 aa).

5 consecutive Tudor domains span residues 62–118 (DGNP…FFYL), 291–350 (AENL…FFRM), 527–584 (KPVV…FQQL), 757–816 (EPLL…FLKM), and 974–1030 (PQTF…AGDI). The tract at residues 1125–1216 (ASACKKESST…SSKPEVVKPK (92 aa)) is disordered. The span at 1127-1152 (ACKKESSTGPKRDAIDQVPKSRESHA) shows a compositional bias: basic and acidic residues. Polar residues-rich tracts occupy residues 1153–1174 (IQRS…STNG) and 1181–1209 (DSGT…TSSK). 2 consecutive Tudor domains span residues 1282–1340 (DIHE…FASF) and 1485–1543 (CMPV…LSDV).

Interacts (via Tudor domain) with buc (when dimethylated on arginine residues); and may be responsible for recruitment of different protein complexes to germ plasm.

It is found in the cytoplasm. Functionally, tudor domain-containing protein involved in germ cell development, more specifically the formation of chromatoid body (during spermiogenesis), Balbiani body (during oogenesis), germ plasm (upon fertilization), and for proper miRNA expression and spliceosome maturation. Required for Balbiani body and germ plasm formation and mobility through interaction with dimethylated arginines in the prion-like protein Bucky ball (buc). Coordinates transcript deposition into future primordial germ cells. Interacts with known germ plasm mRNAs such as vasa, dazl, nanos3 and hook2. The sequence is that of Tudor domain-containing 6 from Danio rerio (Zebrafish).